Reading from the N-terminus, the 312-residue chain is Light-independent protochlorophyllide reductase iron-sulfur ATP-binding protein (312 aa).

ATP contacts are provided by residues G55–T60 and K84. Mg(2+) is bound at residue S59. C140 and C174 together coordinate [4Fe-4S] cluster. Residues N225–R226 and P249–L251 each bind ATP.

This sequence belongs to the NifH/BchL/ChlL family. In terms of assembly, homodimer. Protochlorophyllide reductase is composed of three subunits; BchL, BchN and BchB. The cofactor is [4Fe-4S] cluster.

The catalysed reaction is chlorophyllide a + oxidized 2[4Fe-4S]-[ferredoxin] + 2 ADP + 2 phosphate = protochlorophyllide a + reduced 2[4Fe-4S]-[ferredoxin] + 2 ATP + 2 H2O. It participates in porphyrin-containing compound metabolism; bacteriochlorophyll biosynthesis (light-independent). Functionally, component of the dark-operative protochlorophyllide reductase (DPOR) that uses Mg-ATP and reduced ferredoxin to reduce ring D of protochlorophyllide (Pchlide) to form chlorophyllide a (Chlide). This reaction is light-independent. The L component serves as a unique electron donor to the NB-component of the complex, and binds Mg-ATP. The chain is Light-independent protochlorophyllide reductase iron-sulfur ATP-binding protein from Rhodopseudomonas palustris (strain BisB18).